The sequence spans 201 residues: Large ribosomal subunit protein bL25 (201 aa).

Residues 181–201 (APRESEEEAEEEATETAKESE) are disordered. The segment covering 185–194 (SEEEAEEEAT) has biased composition (acidic residues).

This sequence belongs to the bacterial ribosomal protein bL25 family. CTC subfamily. As to quaternary structure, part of the 50S ribosomal subunit; part of the 5S rRNA/L5/L18/L25 subcomplex. Contacts the 5S rRNA. Binds to the 5S rRNA independently of L5 and L18.

In terms of biological role, this is one of the proteins that binds to the 5S RNA in the ribosome where it forms part of the central protuberance. The chain is Large ribosomal subunit protein bL25 from Thermoanaerobacter pseudethanolicus (strain ATCC 33223 / 39E) (Clostridium thermohydrosulfuricum).